A 685-amino-acid chain; its full sequence is Probable transcriptional regulator SLK3 (685 aa).

Disordered stretches follow at residues asparagine 25–tyrosine 66 and leucine 108–leucine 129. Over residues glutamine 39–glutamine 56 the composition is skewed to low complexity. Residues proline 176–leucine 423 form a dimerization region. The short motif at arginine 185–arginine 199 is the Nuclear localization signal element. A compositionally biased stretch (polar residues) spans glycine 447–glutamine 459. 3 disordered regions span residues glycine 447 to serine 491, asparagine 512 to glutamate 591, and glutamine 611 to proline 658. The span at methionine 460–threonine 471 shows a compositional bias: low complexity. Residues asparagine 512 to phenylalanine 524 are compositionally biased toward polar residues. Residues serine 525–glutamine 543 are compositionally biased toward low complexity. Polar residues-rich tracts occupy residues arginine 544–asparagine 588, glutamine 611–isoleucine 636, and arginine 645–proline 658.

Belongs to the adn1/SEU family.

It is found in the nucleus. Functionally, probable transcription regulator that functions in the development of the carpel margin meristem similarly to SEUSS (SEU). In association with SEU, supports organ development from meristematic regions by facilitating auxin response and thus organ initiation, and by sustaining meristematic potential through the maintenance of PHABULOSA expression. The polypeptide is Probable transcriptional regulator SLK3 (SLK3) (Arabidopsis thaliana (Mouse-ear cress)).